The following is a 506-amino-acid chain: Anaerobic nitric oxide reductase transcription regulator NorR (506 aa).

At Asp57 the chain carries 4-aspartylphosphate. Positions 187-416 (MIGLSPAMTQ…LEHAIHRAVV (230 aa)) constitute a Sigma-54 factor interaction domain. ATP contacts are provided by residues 215–222 (GETGTGKE) and 278–287 (ADNGTLFLDE). A DNA-binding region (H-T-H motif) is located at residues 481-500 (WAASARALETDVANLHRLAK).

It functions in the pathway nitrogen metabolism; nitric oxide reduction. Its function is as follows. Required for the expression of anaerobic nitric oxide (NO) reductase, acts as a transcriptional activator for at least the norVW operon. Activation also requires sigma-54. In Salmonella newport (strain SL254), this protein is Anaerobic nitric oxide reductase transcription regulator NorR.